The sequence spans 214 residues: Probable nicotinate-nucleotide adenylyltransferase (214 aa).

It belongs to the NadD family.

It catalyses the reaction nicotinate beta-D-ribonucleotide + ATP + H(+) = deamido-NAD(+) + diphosphate. Its pathway is cofactor biosynthesis; NAD(+) biosynthesis; deamido-NAD(+) from nicotinate D-ribonucleotide: step 1/1. Catalyzes the reversible adenylation of nicotinate mononucleotide (NaMN) to nicotinic acid adenine dinucleotide (NaAD). This chain is Probable nicotinate-nucleotide adenylyltransferase, found in Buchnera aphidicola subsp. Acyrthosiphon pisum (strain 5A).